The sequence spans 532 residues: Small ribosomal subunit protein uS2cz (532 aa).

Residues 1–271 (METLEKNFKK…SPISSKEKKA (271 aa)) form an N-terminal extension region. 3 TRAM domains span residues 38–97 (ALQA…SILN), 127–186 (DFKV…KPIL), and 197–260 (NQMI…KILK).

The protein belongs to the universal ribosomal protein uS2 family.

The protein resides in the plastid. The protein localises to the chloroplast. This Tetradesmus obliquus (Green alga) protein is Small ribosomal subunit protein uS2cz (rps2-1).